Here is a 299-residue protein sequence, read N- to C-terminus: Delta-9 desaturase-like 2 protein (299 aa).

The helical transmembrane segment at Trp55–Ser75 threads the bilayer. The Histidine box-1 motif lies at His77–His82. Residues His114–His118 carry the Histidine box-2 motif. A helical membrane pass occupies residues Leu174–Leu194. The Histidine box-3 signature appears at His246–His250. A helical transmembrane segment spans residues Trp262 to Thr282.

The protein belongs to the fatty acid desaturase type 1 family. Requires Fe cation as cofactor.

It localises to the endoplasmic reticulum membrane. It functions in the pathway lipid metabolism; polyunsaturated fatty acid biosynthesis. The protein is Delta-9 desaturase-like 2 protein of Arabidopsis thaliana (Mouse-ear cress).